A 1165-amino-acid chain; its full sequence is Valine--tRNA ligase (1165 aa).

Residues 43 to 53 (PNVTGSLHMGH) carry the 'HIGH' region motif. The short motif at 800-804 (KMSKT) is the 'KMSKS' region element. An ATP-binding site is contributed by lysine 803. 2 coiled-coil regions span residues 1001-1032 (KNED…SDLQ) and 1097-1165 (HVDL…VLRS).

It belongs to the class-I aminoacyl-tRNA synthetase family. ValS type 1 subfamily. Monomer.

It is found in the cytoplasm. It carries out the reaction tRNA(Val) + L-valine + ATP = L-valyl-tRNA(Val) + AMP + diphosphate. Functionally, catalyzes the attachment of valine to tRNA(Val). As ValRS can inadvertently accommodate and process structurally similar amino acids such as threonine, to avoid such errors, it has a 'posttransfer' editing activity that hydrolyzes mischarged Thr-tRNA(Val) in a tRNA-dependent manner. The protein is Valine--tRNA ligase of Aquifex aeolicus (strain VF5).